The following is a 275-amino-acid chain: Putative ribonuclease-like protein YfkH (275 aa).

6 helical membrane passes run 23-43 (LAYFFLLSLFPFLIFMLTLTA), 83-103 (LLSFGIIAALWSASNGMNAIV), 126-146 (IFLTIAMVFTILVALLLPVFG), 172-192 (WGVSPLVLLIVFSALYVIAPN), 199-219 (FVMPGAVFATIGWIIVSTLFS), and 235-255 (IGGIIVLMIWFYLSGILIILG).

The protein localises to the cell membrane. The sequence is that of Putative ribonuclease-like protein YfkH (yfkH) from Bacillus subtilis (strain 168).